The sequence spans 176 residues: RNA pyrophosphohydrolase (176 aa).

The 144-residue stretch at 6 to 149 (GYRPNVGIII…KRNVYEMALT (144 aa)) folds into the Nudix hydrolase domain. The Nudix box motif lies at 38–59 (GGIKPGESPEAAMYRELMEEVG).

The protein belongs to the Nudix hydrolase family. RppH subfamily. The cofactor is a divalent metal cation.

Its function is as follows. Accelerates the degradation of transcripts by removing pyrophosphate from the 5'-end of triphosphorylated RNA, leading to a more labile monophosphorylated state that can stimulate subsequent ribonuclease cleavage. This is RNA pyrophosphohydrolase from Laribacter hongkongensis (strain HLHK9).